The primary structure comprises 149 residues: DnaJ homolog subfamily C member 24 (149 aa).

One can recognise a J domain in the interval Asp-11–Arg-82. The DPH-type MB domain occupies Val-93–Tyr-148. 4 residues coordinate Zn(2+): Cys-115, Cys-117, Cys-136, and Cys-139.

This sequence belongs to the DPH4 family. In terms of assembly, monomer and homooligomer. Iron binding promotes oligomerization.

The protein resides in the cytoplasm. Its subcellular location is the cytoskeleton. The protein operates within protein modification; peptidyl-diphthamide biosynthesis. Its function is as follows. Stimulates the ATPase activity of several Hsp70-type chaperones. This ability is enhanced by iron-binding. The iron-bound form is redox-active and can function as electron carrier. Plays a role in the diphthamide biosynthesis, a post-translational modification of histidine which occurs in translation elongation factor 2 (EEF2) which can be ADP-ribosylated by diphtheria toxin and by Pseudomonas exotoxin A (Eta). The polypeptide is DnaJ homolog subfamily C member 24 (Homo sapiens (Human)).